The chain runs to 359 residues: Phosphate acyltransferase (359 aa).

This sequence belongs to the PlsX family. As to quaternary structure, homodimer. Probably interacts with PlsY.

It localises to the cytoplasm. The catalysed reaction is a fatty acyl-[ACP] + phosphate = an acyl phosphate + holo-[ACP]. It functions in the pathway lipid metabolism; phospholipid metabolism. Functionally, catalyzes the reversible formation of acyl-phosphate (acyl-PO(4)) from acyl-[acyl-carrier-protein] (acyl-ACP). This enzyme utilizes acyl-ACP as fatty acyl donor, but not acyl-CoA. The sequence is that of Phosphate acyltransferase from Citrobacter koseri (strain ATCC BAA-895 / CDC 4225-83 / SGSC4696).